A 976-amino-acid chain; its full sequence is Mast/stem cell growth factor receptor kita (976 aa).

An N-terminal signal peptide occupies residues 1-21 (MEYHCVLFTVLLQLIIQPGRS). Residues 22 to 515 (RPTITPEGPR…NTVPHELFTP (494 aa)) lie on the Extracellular side of the membrane. Ig-like C2-type domains follow at residues 23 to 105 (PTIT…VYVK), 100 to 199 (IYVY…LTVR), 206 to 301 (PPIT…VWVN), 308 to 402 (INIT…FEVH), and 399 to 504 (FEVH…FSIS). N-linked (GlcNAc...) asparagine glycans are attached at residues Asn39 and Asn47. Disulfide bonds link Cys44/Cys89, Cys131/Cys180, Cys146/Cys177, and Cys228/Cys285. Residues Asn282, Asn309, Asn315, Asn352, Asn449, and Asn477 are each glycosylated (N-linked (GlcNAc...) asparagine). Cys422 and Cys488 are oxidised to a cystine. A helical membrane pass occupies residues 516 to 536 (LLIGFVAAAVILVLILIVLTY). Topologically, residues 537–976 (KYMQKPKYQI…DRSSPSHPVV (440 aa)) are cytoplasmic. Tyr559 contacts Mg(2+). Phosphotyrosine; by autocatalysis occurs at positions 559 and 561. Positions 580-922 (LRFGKTLGSG…ISDSTKHIYL (343 aa)) constitute a Protein kinase domain. ATP-binding positions include 587–594 (GSGAFGKV), Lys614, and 662–668 (EYCCFGD). Phosphotyrosine; by autocatalysis occurs at positions 691 and 707. Asp777 serves as the catalytic Proton acceptor. An ATP-binding site is contributed by Arg781. Mg(2+)-binding residues include Asn782 and Asp795. Tyr808 and Tyr921 each carry phosphotyrosine; by autocatalysis. The interval 929–976 (PAAPGPREESSSHVHRLNSVGSHSTATQPLLSSNDVFLDRSSPSHPVV) is disordered. Residues 947-976 (SVGSHSTATQPLLSSNDVFLDRSSPSHPVV) are compositionally biased toward polar residues.

It belongs to the protein kinase superfamily. Tyr protein kinase family. CSF-1/PDGF receptor subfamily. In terms of processing, ubiquitinated. Rapidly ubiquitinated after autophosphorylation induced by kitlg/scf binding, leading to internalization and degradation. Post-translationally, autophosphorylated on tyrosine residues. Phosphorylated tyrosine residues are important for interaction with specific binding partners. Expressed in cells of the neural crest-melanocyte lineage. In the embryo, also expressed in mesodermal cells that give rise to hematopoietic precursors, notochord, neural crest-derived cells of the branchial arches, pineal gland, retina and mechanoreceptive sensory cells of lateral line neuromasts. Not detected in primordial germ cells or larval gut.

The protein resides in the cell membrane. It catalyses the reaction L-tyrosyl-[protein] + ATP = O-phospho-L-tyrosyl-[protein] + ADP + H(+). Its function is as follows. Tyrosine-protein kinase that acts as a cell-surface receptor for the cytokine kitlg/scf and plays a role in the regulation of cell survival and proliferation, hematopoiesis, stem cell maintenance, gametogenesis, and in mast cell development, migration and function. Required for the migration of cells in the melanocyte lineage and the survival of embryonic melanocytes. Required for the differentiation of some, but not all, melanocytes. Not essential for hematopoiesis or primordial germ cell development. In Danio rerio (Zebrafish), this protein is Mast/stem cell growth factor receptor kita (kita).